The chain runs to 658 residues: Vertnin (658 aa).

Belongs to the vertnin family.

It localises to the nucleus. Acts as a transcription factor that regulates development of thoracic vertebrae. The sequence is that of Vertnin (VRTN) from Bos taurus (Bovine).